Reading from the N-terminus, the 2625-residue chain is Highly reducing polyketide synthase frbB (2625 aa).

Residues 1–10 (MRNIDEHMSE) show a composition bias toward basic and acidic residues. The segment at 1-25 (MRNIDEHMSERATLQSSGGYGERDS) is disordered. In terms of domain architecture, Ketosynthase family 3 (KS3) spans 27–449 (VEPIAIIGMS…GTNAHVILDR (423 aa)). Residues Cys200, His334, and His375 each act as for beta-ketoacyl synthase activity in the active site. Positions 563 to 883 (YVFSGQGAQY…DAASTLLTTI (321 aa)) are malonyl-CoA:ACP transacylase (MAT) domain. Residues 942–1080 (HELLGNMSTD…GRIRAVLDDS (139 aa)) form an N-terminal hotdog fold region. The tract at residues 942-1252 (HELLGNMSTD…GMILAKLPGG (311 aa)) is dehydratase (DH) domain. The PKS/mFAS DH domain occupies 942–1255 (HELLGNMSTD…LAKLPGGTSR (314 aa)). Catalysis depends on His974, which acts as the Proton acceptor; for dehydratase activity. A C-terminal hotdog fold region spans residues 1102–1255 (VRFVSPSAFY…LAKLPGGTSR (154 aa)). The active-site Proton donor; for dehydratase activity is the Asp1167. The methyltransferase (CMet) domain stretch occupies residues 1490-1673 (YHQIKAYIAE…GFVDTEPVFR (184 aa)). Positions 1907 to 2220 (GLLETFHWKP…SGKHIGKVIL (314 aa)) are enoyl reductase (ER) domain. The tract at residues 2261-2439 (AVYIVVGGLG…GYSINIGPVS (179 aa)) is ketoreductase (KR) domain. The 78-residue stretch at 2542 to 2619 (GAEAAVLTAI…HLARLAAEES (78 aa)) folds into the Carrier domain. At Ser2579 the chain carries O-(pantetheine 4'-phosphoryl)serine.

Its pathway is antifungal biosynthesis. Functionally, highly reducing polyketide synthase; part of the gene cluster that mediates the biosynthesis of the antifungal antibiotic FR901469, an inhibitor of beta-1,3-glucansynthase, exerting antifungal activity against the pathogenes Candida albicans and Aspergillus fumigatus. FR901469 is a cyclic depsipeptide containing 12 amino acid residues and a fatty acid chain. The NRPS frbI contains 12 modules responsible for the formation of the depsipeptide backbone which is denoted as Acyl-Thr-Ala-Tyr-Val-4OHPro-Thr-Thr-3OHPro-threo3OHGln-Gly-Thr-Orn-OH (C71H116N14O23). The PKS frbB is probably involved in the production of the hydrocarbon chain, and the acyl-CoA ligase frbC might be involved in the transport of the chain to the peptide ptoduct of frbI. Because FR901469 contains 3 hydroxylated amino acid residues, the 3 oxygenases frbA, frbH, and frbJ might be participating in amino acid hydroxylation. As no thioesterase domains were detected in frbI or frbB, the thioesterases frbD and frbE may instead release and cyclize the products of the NRPS and PKS, respectively. The protein is Highly reducing polyketide synthase frbB of Dothideomycetidae sp. (strain 11243) (Fungal sp. (strain No.11243)).